Consider the following 218-residue polypeptide: Octanoyltransferase (218 aa).

Residues 30 to 212 (ENTADEIWLV…HFYNILGYNA (183 aa)) enclose the BPL/LPL catalytic domain. Residues 69-76 (RGGQITYH), 141-143 (SLG), and 154-156 (GLA) each bind substrate. The Acyl-thioester intermediate role is filled by Cys172.

The protein belongs to the LipB family.

It is found in the cytoplasm. It catalyses the reaction octanoyl-[ACP] + L-lysyl-[protein] = N(6)-octanoyl-L-lysyl-[protein] + holo-[ACP] + H(+). It participates in protein modification; protein lipoylation via endogenous pathway; protein N(6)-(lipoyl)lysine from octanoyl-[acyl-carrier-protein]: step 1/2. Catalyzes the transfer of endogenously produced octanoic acid from octanoyl-acyl-carrier-protein onto the lipoyl domains of lipoate-dependent enzymes. Lipoyl-ACP can also act as a substrate although octanoyl-ACP is likely to be the physiological substrate. The protein is Octanoyltransferase of Actinobacillus pleuropneumoniae serotype 5b (strain L20).